A 79-amino-acid chain; its full sequence is U-myrmeciitoxin(01)-Mg9a (79 aa).

Residues 1–21 (MKLSCLLLTLAIIFVLTIVHA) form the signal peptide. Residues 22-48 (PNVEAKALANPESDAIGFADAVGEADP) constitute a propeptide that is removed on maturation. At glutamine 78 the chain carries Glutamine amide.

Expressed by the venom gland.

The protein resides in the secreted. Functionally, may have antimicrobial properties, like most ant linear peptides. In Myrmecia gulosa (Red bulldog ant), this protein is U-myrmeciitoxin(01)-Mg9a.